The primary structure comprises 264 residues: Molybdenum transport system permease protein ModB (264 aa).

A run of 6 helical transmembrane segments spans residues 11 to 31 (VYLP…AIAI), 57 to 77 (TAAA…LVLA), 90 to 110 (LILL…LYAF), 127 to 147 (IAFS…PYLV), 176 to 196 (WWRV…VLAF), and 234 to 254 (AAVA…LGVG). In terms of domain architecture, ABC transmembrane type-1 spans 51–253 (LLLSVKTAAA…VVAALVVLGV (203 aa)).

This sequence belongs to the binding-protein-dependent transport system permease family. CysTW subfamily.

Its subcellular location is the cell membrane. Functionally, part of the binding-protein-dependent transport system ModABCD for molybdenum; probably responsible for the translocation of the substrate across the membrane. This chain is Molybdenum transport system permease protein ModB (modB), found in Mycobacterium bovis (strain ATCC BAA-935 / AF2122/97).